A 1193-amino-acid polypeptide reads, in one-letter code: Chloride channel protein 2 (1193 aa).

Over methionine 1 to leucine 168 the chain is Cytoplasmic. The segment at serine 76 to aspartate 97 is disordered. The next 2 membrane-spanning stretches (helical) occupy residues glycine 169–tyrosine 204 and valine 213–isoleucine 236. Positions glycine 242–proline 246 match the Selectivity filter part_1 motif. Serine 243 is a chloride binding site. The helical intramembrane region spans isoleucine 245–leucine 252. 2 helical membrane passes run leucine 261–serine 279 and glutamate 286–valine 304. The short motif at glycine 284–proline 288 is the Selectivity filter part_2 element. Intramembrane regions (helical) lie at residues methionine 320–cysteine 332 and proline 336–isoleucine 344. Transmembrane regions (helical) follow at residues tyrosine 356–leucine 373, leucine 402–methionine 430, phenylalanine 439–isoleucine 458, phenylalanine 511–threonine 530, and glycine 536–phenylalanine 555. Positions glycine 536 to proline 540 match the Selectivity filter part_3 motif. Residue phenylalanine 538 coordinates chloride. The helical intramembrane region spans glycine 576–valine 590. The segment at residues threonine 591 to histidine 592 is an intramembrane region (note=Loop between two helices). An intramembrane region (helical) is located at residues threonine 593 to threonine 604. Residues glycine 605 to histidine 609 constitute an intramembrane region (note=Loop between two helices). A helical membrane pass occupies residues valine 610–leucine 626. At leucine 627–alanine 1193 the chain is on the cytoplasmic side. Chloride is bound at residue tyrosine 632. Residues methionine 663–glutamate 723 enclose the CBS 1 domain. 3 disordered regions span residues threonine 848 to lysine 884, asparagine 1103 to lysine 1122, and isoleucine 1159 to alanine 1193. Residues isoleucine 1048–phenylalanine 1105 enclose the CBS 2 domain. A compositionally biased stretch (polar residues) spans glycine 1165–alanine 1193.

It belongs to the chloride channel (TC 2.A.49) family. At embryonic stages 13-16, expressed in a subset of the midline cells of the midline primordium and in all of the midline glia. Expressed along the Z-line of the sarcomere in larval longitudinal muscles.

The protein resides in the membrane. In terms of biological role, voltage-gated chloride channel. Chloride channels have several functions including the regulation of cell volume; membrane potential stabilization, signal transduction and transepithelial transport. The sequence is that of Chloride channel protein 2 (ClC-a) from Drosophila melanogaster (Fruit fly).